We begin with the raw amino-acid sequence, 128 residues long: Probable 4-amino-4-deoxy-L-arabinose-phosphoundecaprenol flippase subunit ArnF (128 aa).

The Cytoplasmic segment spans residues 1–2 (MG). A helical membrane pass occupies residues 3 to 23 (LIWGLFSVIIASVAQLSLGFA). Residues 24–35 (ASHLPPMTHLWD) are Periplasmic-facing. Residues 36–56 (FIAALLAFGLDARILLLGLLG) form a helical membrane-spanning segment. Residues 57–76 (YLLSVFCWYKTLHKLALSKA) are Cytoplasmic-facing. The helical transmembrane segment at 77 to 97 (YALLSMSYVLVWIASMVLPGW) threads the bilayer. Residues 98–100 (EGT) lie on the Periplasmic side of the membrane. A helical transmembrane segment spans residues 101-121 (FSLKALLGVACIMSGLMLIFL). The Cytoplasmic segment spans residues 122 to 128 (PMTKQRY).

It belongs to the ArnF family. As to quaternary structure, heterodimer of ArnE and ArnF.

The protein resides in the cell inner membrane. It functions in the pathway bacterial outer membrane biogenesis; lipopolysaccharide biosynthesis. In terms of biological role, translocates 4-amino-4-deoxy-L-arabinose-phosphoundecaprenol (alpha-L-Ara4N-phosphoundecaprenol) from the cytoplasmic to the periplasmic side of the inner membrane. This Escherichia coli O9:H4 (strain HS) protein is Probable 4-amino-4-deoxy-L-arabinose-phosphoundecaprenol flippase subunit ArnF.